Consider the following 684-residue polypeptide: MTGARNWLNKPLIFFKFNNHHTASPGDKMVKYVAFFEELGKDDVGIAGGKGANLGELTQAGIPVPPGFVVTAATYDKFMTDTGLQPVVMEMLENLDVNDTKELQRVSAEIKDIITSTEVPEDIQTLIIESYNALCQRIGKDDVYVAIRSSATAEDLPEASFAGQQDTFLNIRGAEDVLDYVRRCWASLFEARAIFYREENNFDHSKVYIAVVVQEMVDAEKAGVMFTVHPSTGEDRILIEGSWGLGEAVVSGSVTPDTYWVDKGTGKLLEFTVGEKNIMFTREDGRTVKKEVPPELRNKRVLSDGEIAALAEMGRRIQDHYGSPQDTEWAIMDGDVYMLQSRPITTLGEATEETEVKSREILVKGLGASPGLASGRVKIIREIHELDKIQIGDILVTVMTTPDMVPAMKRASGIITDEGGVTCHAAIVSRELGIPCVVGTGNATEVLKENQVVSIDGNRGLVYEGSVIEGEKKEAEAETVTVESPLLTVTEVKVNVSMPEAARKAAATGADGVGLLRTEHMMLTTGVHPRKFIEEGREDELVNTLAENILKVADEFYPRPVWYRTLDAPTDEFKTLEGGENEPYEHNPMLGWRGIRRELDEPEILRAEFRAIKKLHEQGYTNIGIMIPLVQHPDELRKAKMIAEEAGLKPHRDVEFGIMVETPAAALIIEDFIEEGIDFVRLEP.

Histidine 424 serves as the catalytic Tele-phosphohistidine intermediate. Arginine 517, arginine 564, and glutamate 661 together coordinate substrate. Position 661 (glutamate 661) interacts with Mg(2+).

It belongs to the PEP-utilizing enzyme family. Mg(2+) is required as a cofactor.

It carries out the reaction pyruvate + ATP + H2O = phosphoenolpyruvate + AMP + phosphate + 2 H(+). It functions in the pathway carbohydrate biosynthesis; gluconeogenesis. Catalyzes the phosphorylation of pyruvate to phosphoenolpyruvate. In Methanothermobacter thermautotrophicus (strain ATCC 29096 / DSM 1053 / JCM 10044 / NBRC 100330 / Delta H) (Methanobacterium thermoautotrophicum), this protein is Probable phosphoenolpyruvate synthase (ppsA).